The following is a 258-amino-acid chain: Acyl-[acyl-carrier-protein]--UDP-N-acetylglucosamine O-acyltransferase (258 aa).

It belongs to the transferase hexapeptide repeat family. LpxA subfamily. As to quaternary structure, homotrimer.

It localises to the cytoplasm. The catalysed reaction is a (3R)-hydroxyacyl-[ACP] + UDP-N-acetyl-alpha-D-glucosamine = a UDP-3-O-[(3R)-3-hydroxyacyl]-N-acetyl-alpha-D-glucosamine + holo-[ACP]. Its pathway is glycolipid biosynthesis; lipid IV(A) biosynthesis; lipid IV(A) from (3R)-3-hydroxytetradecanoyl-[acyl-carrier-protein] and UDP-N-acetyl-alpha-D-glucosamine: step 1/6. Involved in the biosynthesis of lipid A, a phosphorylated glycolipid that anchors the lipopolysaccharide to the outer membrane of the cell. This is Acyl-[acyl-carrier-protein]--UDP-N-acetylglucosamine O-acyltransferase from Neisseria meningitidis serogroup A / serotype 4A (strain DSM 15465 / Z2491).